The primary structure comprises 67 residues: Protein AaeX (67 aa).

Helical transmembrane passes span 3–23 (LFPVIVIFGLSFPPIFFELLL) and 43–63 (FVWHPALFNTALYCCLFYLLS).

This sequence belongs to the AaeX family.

It localises to the cell membrane. The sequence is that of Protein AaeX from Cronobacter sakazakii (strain ATCC BAA-894) (Enterobacter sakazakii).